The sequence spans 325 residues: NADH-quinone oxidoreductase subunit H (325 aa).

8 helical membrane passes run Ile-11–Phe-31, Ala-81–Val-101, Ile-114–Gly-134, Leu-154–Phe-174, Val-186–Val-206, Phe-237–Phe-257, Leu-265–Ile-285, and Val-304–Ala-324.

Belongs to the complex I subunit 1 family. As to quaternary structure, NDH-1 is composed of 13 different subunits. Subunits NuoA, H, J, K, L, M, N constitute the membrane sector of the complex.

The protein resides in the cell inner membrane. It carries out the reaction a quinone + NADH + 5 H(+)(in) = a quinol + NAD(+) + 4 H(+)(out). Its function is as follows. NDH-1 shuttles electrons from NADH, via FMN and iron-sulfur (Fe-S) centers, to quinones in the respiratory chain. The immediate electron acceptor for the enzyme in this species is believed to be ubiquinone. Couples the redox reaction to proton translocation (for every two electrons transferred, four hydrogen ions are translocated across the cytoplasmic membrane), and thus conserves the redox energy in a proton gradient. This subunit may bind ubiquinone. This chain is NADH-quinone oxidoreductase subunit H, found in Yersinia pseudotuberculosis serotype O:1b (strain IP 31758).